Reading from the N-terminus, the 286-residue chain is MSDYQETLYQGYGQRFSIDNMLHEVRTEHQHLVIFENARMGRVMALDGVIQTTEADEFIYHEMLTHVPILAHGAARRVLIIGGGDGGMLREVAKHKSVERITMVEIDGTVVDMCKEFLPNHSQGAFDDPRLNLVIDDGMRFVATTEERFDVIISDSTDPIGPGEVLFSENFYQACRRCLNEGGILVTQNGTPFMQLEEVRTTAARTDGLFADWHFYQAAVPTYIGGAMTFAWGSTHEGLRRLPLETLRQRFRDSGIATRYYNADIHLGAFALPQYVLQAIGKQDND.

The region spanning 1-235 (MSDYQETLYQ…GAMTFAWGST (235 aa)) is the PABS domain. Q30 lines the S-methyl-5'-thioadenosine pocket. Positions 61 and 85 each coordinate spermidine. Residues E105 and 137–138 (DG) each bind S-methyl-5'-thioadenosine. D155 acts as the Proton acceptor in catalysis. 155–158 (DSTD) lines the spermidine pocket. P162 serves as a coordination point for S-methyl-5'-thioadenosine.

Belongs to the spermidine/spermine synthase family. In terms of assembly, homodimer or homotetramer.

The protein resides in the cytoplasm. The enzyme catalyses S-adenosyl 3-(methylsulfanyl)propylamine + putrescine = S-methyl-5'-thioadenosine + spermidine + H(+). It functions in the pathway amine and polyamine biosynthesis; spermidine biosynthesis; spermidine from putrescine: step 1/1. In terms of biological role, catalyzes the irreversible transfer of a propylamine group from the amino donor S-adenosylmethioninamine (decarboxy-AdoMet) to putrescine (1,4-diaminobutane) to yield spermidine. This is Polyamine aminopropyltransferase 1 from Pseudomonas aeruginosa (strain ATCC 15692 / DSM 22644 / CIP 104116 / JCM 14847 / LMG 12228 / 1C / PRS 101 / PAO1).